The following is a 404-amino-acid chain: MVQLAPAAAMDEVTFRSDTVLSDVHLYTPNHRHLMVRLNSVGQPVFLSQFKLLWSQDSWTDSGAKGGSHRDVHTKEPPSAETGSTGSPPGSGHGNEGFSLQAGTDTTGQEVAEAQLDEDGDLDVVRRPRAASDSNPAGPLRDKVHPMILAQEEDDVLGEEAQGSPHDIIRIEHTMATPLEDVGKQVWRGALLLADYILFRQDLFRGCTALELGAGTGLASIIAATMARTVYCTDVGADLLSMCQRNIALNSHLAATGGGIVRVKELDWLKDDLCTDPKVPFSWSQEEISDLYDHTTILFAAEVFYDDDLTDAVFKTLSRLAHRLKNACTAILSVEKRLNFTLRHLDVTCEAYDHFRSCLHALEQLADGKLRFVVEPVEASFPQLLVYERLQQLELWKIIAEPVT.

Disordered stretches follow at residues 60-102 and 115-145; these read TDSG…SLQA and QLDEDGDLDVVRRPRAASDSNPAGPLRDKVH. The segment covering 68–78 has biased composition (basic and acidic residues); sequence SHRDVHTKEPP. A compositionally biased stretch (low complexity) spans 79 to 88; the sequence is SAETGSTGSP. A Phosphoserine modification is found at serine 132.

Belongs to the methyltransferase superfamily. METTL22 family. Interacts with members of the heat shock protein 90 and 70 families; these proteins probably are methylation substrates.

The protein localises to the nucleus. It catalyses the reaction L-lysyl-[protein] + 3 S-adenosyl-L-methionine = N(6),N(6),N(6)-trimethyl-L-lysyl-[protein] + 3 S-adenosyl-L-homocysteine + 3 H(+). In terms of biological role, protein N-lysine methyltransferase. Trimethylates KIN at Lys-135 (in vitro). This Homo sapiens (Human) protein is Methyltransferase-like protein 22 (METTL22).